The chain runs to 191 residues: Protein G1-like1 (191 aa).

A disordered region spans residues 1–29 (MDMIGMASPAESPGGGGTARPSRYESQKR). The ALOG domain maps to 23 to 150 (RYESQKRRDW…ARGIAYEKKR (128 aa)). Positions 148-152 (KKRRK) match the Nuclear localization signal motif. Residues 152–179 (KRAAASHTKQKQQQQQLVEQAAAAAEAH) adopt a coiled-coil conformation.

It belongs to the plant homeotic and developmental regulators ALOG protein family.

Its subcellular location is the nucleus. In terms of biological role, probable transcription regulator that acts as a developmental regulator by promoting cell growth in response to light. This chain is Protein G1-like1, found in Oryza sativa subsp. indica (Rice).